Here is a 139-residue protein sequence, read N- to C-terminus: Protein archease (139 aa).

Ca(2+) contacts are provided by Asp-12, Asp-138, and Ile-139.

It belongs to the archease family.

Activates the tRNA-splicing ligase complex by facilitating the enzymatic turnover of catalytic subunit RtcB. Acts by promoting the guanylylation of RtcB, a key intermediate step in tRNA ligation. Can also alter the NTP specificity of RtcB such that ATP, dGTP or ITP is used efficiently. In Sulfolobus acidocaldarius (strain ATCC 33909 / DSM 639 / JCM 8929 / NBRC 15157 / NCIMB 11770), this protein is Protein archease.